A 164-amino-acid chain; its full sequence is RNA pyrophosphohydrolase (164 aa).

A Nudix hydrolase domain is found at 8 to 153; that stretch reads PYRSNVGAAL…KRPIYERLAR (146 aa). The short motif at 45-66 is the Nudix box element; it reads GGIDGDEDPAAAVLRELDEEIG.

The protein belongs to the Nudix hydrolase family. RppH subfamily. A divalent metal cation is required as a cofactor.

In terms of biological role, accelerates the degradation of transcripts by removing pyrophosphate from the 5'-end of triphosphorylated RNA, leading to a more labile monophosphorylated state that can stimulate subsequent ribonuclease cleavage. The sequence is that of RNA pyrophosphohydrolase from Acidiphilium cryptum (strain JF-5).